A 476-amino-acid chain; its full sequence is tRNA (cytosine(72)-C(5))-methyltransferase NSUN6 (476 aa).

In terms of domain architecture, PUA spans 111–203; the sequence is QGEVIVGAQC…IGIRMTEPIY (93 aa). Residues 242–248, Asp266, Asp293, and Asp323 each bind S-adenosyl-L-methionine; that span reads CAAPGGK. Cys373 acts as the Nucleophile in catalysis. The residue at position 419 (Lys419) is an N6-acetyllysine.

Belongs to the class I-like SAM-binding methyltransferase superfamily. RsmB/NOP family.

Its subcellular location is the cytoplasm. It carries out the reaction cytidine(72) in tRNA(Thr) + S-adenosyl-L-methionine = 5-methylcytidine(72) in tRNA(Thr) + S-adenosyl-L-homocysteine + H(+). The catalysed reaction is cytidine(72) in tRNA(Cys) + S-adenosyl-L-methionine = 5-methylcytidine(72) in tRNA(Cys) + S-adenosyl-L-homocysteine + H(+). S-adenosyl-L-methionine-dependent methyltransferase that specifically methylates the C5 position of cytosine 72 in tRNA(Thr)(TGT) and tRNA(Cys)(GCA). In vitro also methylates tRNA(Thr)(AGT). Methylation requires, in the acceptor stem region, the presence of the 3'-CCA terminus, the target site C72, the discriminator base U73, and the second and third base pairs (2:71 and 3:70) in the tRNA substrates. The chain is tRNA (cytosine(72)-C(5))-methyltransferase NSUN6 from Mus musculus (Mouse).